A 363-amino-acid polypeptide reads, in one-letter code: Outer membrane porin C (363 aa).

An N-terminal signal peptide occupies residues 1–21; sequence MKVKVLSLLVPALLVAGAANA. Positions 174–187 are enriched in polar residues; that stretch reads NGSASGEDQTNNGR. Residues 174–195 form a disordered region; sequence NGSASGEDQTNNGRTELRQNGD.

It belongs to the Gram-negative porin family. Homotrimer. Probably forms mixed heterotrimers with OmpF; other mixed heterotrimers are also probable.

It localises to the cell outer membrane. In terms of biological role, forms pores that allow passive diffusion of small molecules across the outer membrane. (Microbial infection) Binds CdiA-EC536, probably acts as the outer membrane receptor for toxin CdiA-EC536 with OmpF. This chain is Outer membrane porin C (ompC), found in Enterobacter cloacae subsp. cloacae (strain ATCC 13047 / DSM 30054 / NBRC 13535 / NCTC 10005 / WDCM 00083 / NCDC 279-56).